Consider the following 100-residue polypeptide: Apolipoprotein C-II (100 aa).

The first 22 residues, 1-22 (MGTRFLLALFLVLLVLGFEVQG), serve as a signal peptide directing secretion. A lipid binding region spans residues 66–74 (TVDEKLRDM). Residues 78 to 100 (STAAVSTYAGIFTDQLLTLLKGD) form a lipoprotein lipase cofactor region.

Belongs to the apolipoprotein C2 family. Proapolipoprotein C-II is synthesized as a sialic acid containing glycoprotein which is subsequently desialylated prior to its proteolytic processing. In terms of processing, proapolipoprotein C-II, the major form found in plasma undergoes proteolytic cleavage of its N-terminal hexapeptide to generate apolipoprotein C-II, which occurs as the minor form in plasma.

The protein resides in the secreted. Its function is as follows. Component of chylomicrons, very low-density lipoproteins (VLDL), low-density lipoproteins (LDL), and high-density lipoproteins (HDL) in plasma. Plays an important role in lipoprotein metabolism as an activator of lipoprotein lipase. Both proapolipoprotein C-II and apolipoprotein C-II can activate lipoprotein lipase. The polypeptide is Apolipoprotein C-II (APOC2) (Otolemur garnettii (Small-eared galago)).